The primary structure comprises 830 residues: Pentatricopeptide repeat-containing protein At5g55740, chloroplastic (830 aa).

Residues 1 to 59 constitute a chloroplast transit peptide; that stretch reads MASLPFNTIPNKVPFSVSSKPSSKHHDEQAHSPSSTSYFHRVSSLCKNGEIKEALSLVT. The interval 15–36 is disordered; the sequence is FSVSSKPSSKHHDEQAHSPSST. 19 PPR repeats span residues 69 to 103, 106 to 136, 137 to 171, 172 to 206, 207 to 237, 238 to 272, 273 to 307, 308 to 338, 339 to 373, 374 to 408, 409 to 439, 440 to 474, 475 to 509, 510 to 544, 545 to 575, 581 to 611, 612 to 646, 647 to 682, and 683 to 713; these read GPEI…GDFY, NEYI…LRVR, NVFS…EIFP, DNFV…GLED, CVFV…IPDR, NAVA…GVEP, TRVT…GMEL, DNIL…MFEK, DVVT…KLKY, DCVT…SFES, DIVL…TVEK, DLIL…GVPP, NVIT…GIIP, NLIS…GLRP, NAFS…IIRN, LVSI…KLYS, ELPL…GLKP, DNIT…SMKP, and CLEH…MPFK. Positions 718 to 793 are type E motif; the sequence is MIQSLVASCN…KPGCSWIQIT (76 aa). The interval 796–826 is type E(+) motif; sequence EGVHVFVANDKTHTRINEIQMMLALLLYDMG.

Belongs to the PPR family. PCMP-E subfamily.

The protein localises to the plastid. Its subcellular location is the chloroplast. In terms of biological role, plays a major role in chloroplast RNA editing. Acts as a site-recognition transacting factor involved in the edition of the site 2 of ndhD (ndhD-2), which encodes a subunit of the NDH complex. The sequence is that of Pentatricopeptide repeat-containing protein At5g55740, chloroplastic (CRR21) from Arabidopsis thaliana (Mouse-ear cress).